We begin with the raw amino-acid sequence, 414 residues long: Gamma-glutamyl phosphate reductase (414 aa).

Belongs to the gamma-glutamyl phosphate reductase family.

It is found in the cytoplasm. The enzyme catalyses L-glutamate 5-semialdehyde + phosphate + NADP(+) = L-glutamyl 5-phosphate + NADPH + H(+). It functions in the pathway amino-acid biosynthesis; L-proline biosynthesis; L-glutamate 5-semialdehyde from L-glutamate: step 2/2. Functionally, catalyzes the NADPH-dependent reduction of L-glutamate 5-phosphate into L-glutamate 5-semialdehyde and phosphate. The product spontaneously undergoes cyclization to form 1-pyrroline-5-carboxylate. The protein is Gamma-glutamyl phosphate reductase of Limosilactobacillus reuteri (strain DSM 20016) (Lactobacillus reuteri).